A 62-amino-acid polypeptide reads, in one-letter code: Photosystem II reaction center protein Z (62 aa).

2 helical membrane-spanning segments follow: residues alanine 8 to alanine 28 and tyrosine 41 to valine 61.

Belongs to the PsbZ family. In terms of assembly, PSII is composed of 1 copy each of membrane proteins PsbA, PsbB, PsbC, PsbD, PsbE, PsbF, PsbH, PsbI, PsbJ, PsbK, PsbL, PsbM, PsbT, PsbX, PsbY, PsbZ, Psb30/Ycf12, peripheral proteins PsbO, CyanoQ (PsbQ), PsbU, PsbV and a large number of cofactors. It forms dimeric complexes.

The protein resides in the cellular thylakoid membrane. Functionally, may control the interaction of photosystem II (PSII) cores with the light-harvesting antenna, regulates electron flow through the 2 photosystem reaction centers. PSII is a light-driven water plastoquinone oxidoreductase, using light energy to abstract electrons from H(2)O, generating a proton gradient subsequently used for ATP formation. The sequence is that of Photosystem II reaction center protein Z from Rippkaea orientalis (strain PCC 8801 / RF-1) (Cyanothece sp. (strain PCC 8801)).